Reading from the N-terminus, the 530-residue chain is Calcium-dependent protein kinase 14 (530 aa).

G2 carries the N-myristoyl glycine lipid modification. One can recognise a Protein kinase domain in the interval 54-312; it reads YKLGRELGRG…AQQVLDHPWI (259 aa). ATP is bound by residues 60-68 and K83; that span reads LGRGEFGVT. D178 functions as the Proton acceptor in the catalytic mechanism. At S218 the chain carries Phosphoserine. The segment at 318–348 is autoinhibitory domain; that stretch reads ASNVSLGETVRARLKQFSVMNKLKKRALRVI. EF-hand domains lie at 355-390, 391-426, 427-462, and 463-498; these read EETS…LGIV, VPQD…IRKL, GNDE…DVDT, and TSEE…GTDW. Positions 368, 370, 374, 379, 404, 406, 408, 410, 415, 440, 442, 444, 446, 451, 476, 478, 480, and 482 each coordinate Ca(2+). Phosphoserine is present on S484. E487 lines the Ca(2+) pocket.

Belongs to the protein kinase superfamily. Ser/Thr protein kinase family. CDPK subfamily.

The protein resides in the membrane. The catalysed reaction is L-seryl-[protein] + ATP = O-phospho-L-seryl-[protein] + ADP + H(+). It catalyses the reaction L-threonyl-[protein] + ATP = O-phospho-L-threonyl-[protein] + ADP + H(+). Its activity is regulated as follows. Activated by calcium. Autophosphorylation may play an important role in the regulation of the kinase activity. Functionally, may play a role in signal transduction pathways that involve calcium as a second messenger. The protein is Calcium-dependent protein kinase 14 (CPK14) of Arabidopsis thaliana (Mouse-ear cress).